Reading from the N-terminus, the 305-residue chain is Oxidoreductase swnR (305 aa).

This sequence belongs to the NmrA-type oxidoreductase family. Isoflavone reductase subfamily.

It catalyses the reaction L-pipecolate + O2 = L-1-piperideine-6-carboxylate + H2O2 + H(+). The protein operates within mycotoxin biosynthesis. Its function is as follows. Oxidoreductase; part of the gene cluster that mediates the biosynthesis of swainsonine (SW), a cytotoxic fungal alkaloid and a potential cancer therapy drug. Swainsonine production occurs via a multibranched pathway and is dispensable for fungal colonization of plants and infection of insect hosts. The first step of swainsonine biosynthesis is the production of the precursor pipecolic acid (PA) via conversion of L-lysine (Lys) to 1-piperideine-6-carboxylate (P6C) by the aminotransferase swnA, the latter being further reduced to PA by the reductase swnR. The PKS-NRPS hybrid synthetase swnK uptakes and condensates PA and malonyl-CoA with and without skipping of the ketoreductase (KR) domain in order to produce 3 intermediates, 1-oxoindolizidine, (1S)-1-hydroxyindolizin, and (1R)-1-hydroxyindolizine; with the transisomer (1S)-1-hydroxyindolizin being predominant. The terminal thioester reductase (TE) domain of swnK is involved in reduction of the thioester bond to release the intermediate aldehydes. The oxidoreductase swnN could contribute to the reduction of 1-oxoindolizidine to (1S)-1-hydroxyindolizin and (1R)-1-hydroxyindolizine, contributing to the major route of SW production. The dioxygenase swnH2 would be responsible for the oxidization of (1R)-1-hydroxyindolizine into (1R,2S)-1,2-dihydroxyindolizine and of (1S)-1-hydroxyindolizin to yield both (1R,2S)-1,2-dihydroxyindolizine and (1S,2S)-1,2-dihydroxyindolizine. The dioxygenase swnH1 then performs the conversion of the 1,2-dihydroxyindolizine epimers to SW. This is Oxidoreductase swnR from Arthroderma benhamiae (strain ATCC MYA-4681 / CBS 112371) (Trichophyton mentagrophytes).